Reading from the N-terminus, the 290-residue chain is Ribosomal RNA small subunit methyltransferase A (290 aa).

S-adenosyl-L-methionine contacts are provided by Asn27, Leu29, Gly54, Glu75, Asp100, and Asn125.

It belongs to the class I-like SAM-binding methyltransferase superfamily. rRNA adenine N(6)-methyltransferase family. RsmA subfamily.

It localises to the cytoplasm. The catalysed reaction is adenosine(1518)/adenosine(1519) in 16S rRNA + 4 S-adenosyl-L-methionine = N(6)-dimethyladenosine(1518)/N(6)-dimethyladenosine(1519) in 16S rRNA + 4 S-adenosyl-L-homocysteine + 4 H(+). Its function is as follows. Specifically dimethylates two adjacent adenosines (A1518 and A1519) in the loop of a conserved hairpin near the 3'-end of 16S rRNA in the 30S particle. May play a critical role in biogenesis of 30S subunits. The polypeptide is Ribosomal RNA small subunit methyltransferase A (Streptococcus pyogenes serotype M1).